The following is a 180-amino-acid chain: ATP-dependent protease subunit HslV (180 aa).

Residue threonine 2 is part of the active site. Residues glycine 157, cysteine 160, and threonine 163 each contribute to the Na(+) site.

It belongs to the peptidase T1B family. HslV subfamily. A double ring-shaped homohexamer of HslV is capped on each side by a ring-shaped HslU homohexamer. The assembly of the HslU/HslV complex is dependent on binding of ATP.

The protein localises to the cytoplasm. It carries out the reaction ATP-dependent cleavage of peptide bonds with broad specificity.. Its activity is regulated as follows. Allosterically activated by HslU binding. In terms of biological role, protease subunit of a proteasome-like degradation complex believed to be a general protein degrading machinery. The chain is ATP-dependent protease subunit HslV from Tolumonas auensis (strain DSM 9187 / NBRC 110442 / TA 4).